Here is a 182-residue protein sequence, read N- to C-terminus: uncharacterized protein (182 aa).

The region spanning 36–164 is the Nudix hydrolase domain; it reads LRHRATYIVV…TPDSLKALSL (129 aa). The short motif at 73 to 95 is the Nudix box element; it reads GGVVQSGENYLESARREAEEELG. 2 residues coordinate Mg(2+): Glu-89 and Glu-93.

Belongs to the Nudix hydrolase family. The cofactor is Mg(2+).

This is an uncharacterized protein from Yersinia pestis.